A 329-amino-acid chain; its full sequence is Phenylalanine--tRNA ligase alpha subunit (329 aa).

A Mg(2+)-binding site is contributed by Glu-254.

It belongs to the class-II aminoacyl-tRNA synthetase family. Phe-tRNA synthetase alpha subunit type 1 subfamily. Tetramer of two alpha and two beta subunits. The cofactor is Mg(2+).

Its subcellular location is the cytoplasm. The catalysed reaction is tRNA(Phe) + L-phenylalanine + ATP = L-phenylalanyl-tRNA(Phe) + AMP + diphosphate + H(+). This Mannheimia succiniciproducens (strain KCTC 0769BP / MBEL55E) protein is Phenylalanine--tRNA ligase alpha subunit.